Here is a 116-residue protein sequence, read N- to C-terminus: Non-specific lipid-transfer protein (116 aa).

The signal sequence occupies residues 1–23; sequence MASMKVVCVALIMCIVIAPMAES. 4 disulfides stabilise this stretch: C27–C74, C37–C51, C52–C97, and C72–C111.

The protein belongs to the plant LTP family.

Plant non-specific lipid-transfer proteins transfer phospholipids as well as galactolipids across membranes. May play a role in wax or cutin deposition in the cell walls of expanding epidermal cells and certain secretory tissues. The protein is Non-specific lipid-transfer protein of Cicer arietinum (Chickpea).